Reading from the N-terminus, the 269-residue chain is METWRFIDHCSFSGAENMAIDEALLQEAINNHGAPVLRFYTWTRPTLSLGYFQKAQEEVDFSECEKLGVEVVRRPTGGRAVLHEFELTYSIVGSIQHPKLSGTVLESYLKISKGLLLGLKNLGIEGEIAEGKKTSDLSAICFEAPSWYELTVMGRKVIGSAQVRRGDYLLQHGAIVIKMDVDKLFRVLKFKSLEQKERIRASFHRKAGAIHDFSSREFSLAEIKEAFLAGFSEGFEVNFIRSELSLKERELSRQLLREKYNTREWLFRF.

The BPL/LPL catalytic domain maps to 31–239 (NHGAPVLRFY…GFSEGFEVNF (209 aa)). The active-site Acyl-thioester intermediate is the cysteine 141.

The protein belongs to the octanoyltransferase LipM family. Monomer.

The catalysed reaction is octanoyl-[ACP] + L-lysyl-[protein] = N(6)-octanoyl-L-lysyl-[protein] + holo-[ACP] + H(+). Its pathway is protein modification; protein lipoylation via endogenous pathway; protein N(6)-(lipoyl)lysine from octanoyl-[acyl-carrier-protein]. Its function is as follows. Catalyzes the transfer of endogenously produced octanoic acid from octanoyl-acyl-carrier-protein onto the lipoyl domain of GcvH, an intermediate carrier during protein lipoylation. In Carboxydothermus hydrogenoformans (strain ATCC BAA-161 / DSM 6008 / Z-2901), this protein is Octanoyltransferase LipM.